A 446-amino-acid polypeptide reads, in one-letter code: MPEGRRFYIQTFGCQMNEADSGIIARVLLDAGFRRADTEQDADVVLLNTCAVRENAVEKIAHLLEHLKGAKKRRKTLQVGVLGCVPQHQREEMFSRFPAIDFIAGPDSYRRLPSLIDDAASAVRSAMLDFDPSETYVGIRQVREGRISAFIPVMRGCNNMCAFCVVPFTRGRERSQPLAMVTGEARELAEAGYREITLLGQNVNSYSDPASGATFSALLDAVALAAPDVRIRFTTSHPKDISVGLIDTIARRPNICRHVHLPVQSGSDSVLRRMNRGHGISEYLEKIRIIRDALPGVTLSTDIIAGFCGEREEDHRATLDLLRTVRFDAAFMFHYSTREGTLAARTLPDDVAETDKKRRLQEIIDLQQEISAENNRRQVGTVAEVLAESESRRSPGRLLGRTDGNRAVVFDRGECMPGDLVRVRLTSSTSATLSGSREGLIRAFLS.

Residues 5-121 (RRFYIQTFGC…LPSLIDDAAS (117 aa)) enclose the MTTase N-terminal domain. Residues Cys14, Cys50, Cys84, Cys157, Cys161, and Cys164 each contribute to the [4Fe-4S] cluster site. In terms of domain architecture, Radical SAM core spans 143 to 373 (REGRISAFIP…IDLQQEISAE (231 aa)). One can recognise a TRAM domain in the interval 376 to 439 (RRQVGTVAEV…SATLSGSREG (64 aa)).

It belongs to the methylthiotransferase family. MiaB subfamily. As to quaternary structure, monomer. The cofactor is [4Fe-4S] cluster.

The protein resides in the cytoplasm. The enzyme catalyses N(6)-dimethylallyladenosine(37) in tRNA + (sulfur carrier)-SH + AH2 + 2 S-adenosyl-L-methionine = 2-methylsulfanyl-N(6)-dimethylallyladenosine(37) in tRNA + (sulfur carrier)-H + 5'-deoxyadenosine + L-methionine + A + S-adenosyl-L-homocysteine + 2 H(+). In terms of biological role, catalyzes the methylthiolation of N6-(dimethylallyl)adenosine (i(6)A), leading to the formation of 2-methylthio-N6-(dimethylallyl)adenosine (ms(2)i(6)A) at position 37 in tRNAs that read codons beginning with uridine. The chain is tRNA-2-methylthio-N(6)-dimethylallyladenosine synthase from Chlorobium luteolum (strain DSM 273 / BCRC 81028 / 2530) (Pelodictyon luteolum).